A 134-amino-acid chain; its full sequence is Protein PsiE homolog (134 aa).

The next 4 helical transmembrane spans lie at 14–34, 56–76, 82–102, and 106–126; these read LQWI…IFLI, VESI…IKYF, FPLR…IIVS, and PMET…LYIS.

The protein belongs to the PsiE family.

The protein resides in the cell membrane. The polypeptide is Protein PsiE homolog (Bacillus anthracis).